Here is an 821-residue protein sequence, read N- to C-terminus: Serine/threonine-protein kinase CTR1 (821 aa).

2 disordered regions span residues 1–76 (MEMP…LNNQ) and 481–502 (NPGG…PSAN). Residues 14–25 (SQFSDDQVSVSV) show a composition bias toward low complexity. Polar residues predominate over residues 35 to 49 (SLSSENRSNHNSGNT). Residues 551–809 (LNIKEKIGAG…TIMDLLRPLI (259 aa)) form the Protein kinase domain. ATP contacts are provided by residues 557–565 (IGAGSFGTV) and K578. Catalysis depends on D676, which acts as the Proton acceptor.

It belongs to the protein kinase superfamily. TKL Ser/Thr protein kinase family. RAF subfamily. Interacts with EIN2 (via C-terminus). Expressed in both seedlings and adult plants.

The enzyme catalyses L-seryl-[protein] + ATP = O-phospho-L-seryl-[protein] + ADP + H(+). The catalysed reaction is L-threonyl-[protein] + ATP = O-phospho-L-threonyl-[protein] + ADP + H(+). Kinase activity is inhibited by C24:1-ceramide during hypoxia (e.g. submergences). Its function is as follows. Acts as a negative regulator in the ethylene response pathway. Phosphorylates the cytosolic C-terminal domain of EIN2, preventing the signaling in the absence of ethylene. Interacts with C24:1-ceramide upon hypoxic conditions (e.g. submergences) to in turn regulate EIN2 endoplasmic reticulum (ER)-to-nucleus translocation and EIN3 stabilization. This chain is Serine/threonine-protein kinase CTR1, found in Arabidopsis thaliana (Mouse-ear cress).